Reading from the N-terminus, the 191-residue chain is dCTP deaminase (191 aa).

DCTP-binding positions include 112–117 (KSTYAR), 136–138 (TLE), Gln157, Tyr173, and Gln183. Glu138 serves as the catalytic Proton donor/acceptor.

This sequence belongs to the dCTP deaminase family. In terms of assembly, homotrimer.

It carries out the reaction dCTP + H2O + H(+) = dUTP + NH4(+). It participates in pyrimidine metabolism; dUMP biosynthesis; dUMP from dCTP (dUTP route): step 1/2. Its function is as follows. Catalyzes the deamination of dCTP to dUTP. This is dCTP deaminase from Psychrobacter arcticus (strain DSM 17307 / VKM B-2377 / 273-4).